Consider the following 46-residue polypeptide: Esculentin-1 (46 aa).

Cys40 and Cys46 are disulfide-bonded.

As to expression, expressed by the skin glands.

The protein resides in the secreted. Its function is as follows. Antimicrobial peptide. Stimulates insulin release by BRIN-BD11 cells in vitro. The sequence is that of Esculentin-1 from Pelophylax saharicus (Sahara frog).